Here is a 612-residue protein sequence, read N- to C-terminus: Zinc metalloproteinase-disintegrin-like 2d (612 aa).

A signal peptide spans 1-20; it reads MIQVLLVTICLAVFPYQGSS. Positions 21 to 189 are excised as a propeptide; that stretch reads IILGSGNVND…KKASQLNLTP (169 aa). One can recognise a Peptidase M12B domain in the interval 199 to 395; it reads KYIELVIVAD…NRPPCILNKP (197 aa). Glu-202 contributes to the Ca(2+) binding site. A glycan (N-linked (GlcNAc...) asparagine) is linked at Asn-218. Asp-286 contacts Ca(2+). 3 disulfide bridges follow: Cys-310–Cys-390, Cys-350–Cys-374, and Cys-352–Cys-357. A Zn(2+)-binding site is contributed by His-335. Residue Glu-336 is part of the active site. Zn(2+)-binding residues include His-339 and His-345. Ca(2+)-binding residues include Cys-390, Asn-393, Val-405, Asn-408, Phe-410, Glu-412, Glu-415, and Asp-418. The Disintegrin domain maps to 403 to 489; sequence PPVCGNYFVE…DCPTDNFQRN (87 aa). 14 disulfide bridges follow: Cys-406–Cys-435, Cys-417–Cys-430, Cys-419–Cys-425, Cys-429–Cys-452, Cys-443–Cys-449, Cys-448–Cys-474, Cys-461–Cys-481, Cys-468–Cys-500, Cys-493–Cys-505, Cys-512–Cys-562, Cys-527–Cys-573, Cys-540–Cys-550, Cys-557–Cys-599, and Cys-593–Cys-605. Positions 467 to 469 match the D/ECD-tripeptide motif; it reads ECD.

It belongs to the venom metalloproteinase (M12B) family. P-III subfamily. It depends on Zn(2+) as a cofactor. Expressed by the venom gland.

It is found in the secreted. Functionally, snake venom metalloproteinase that impairs hemostasis in the envenomed animal. In Crotalus adamanteus (Eastern diamondback rattlesnake), this protein is Zinc metalloproteinase-disintegrin-like 2d.